The sequence spans 255 residues: Placenta-expressed transcript 1 protein (255 aa).

The signal sequence occupies residues 1-26; it reads MPALRTLLPHLGLFLCLALCFSPSFS. N-linked (GlcNAc...) asparagine glycans are attached at residues Asn57, Asn67, and Asn126. Ser236 carries GPI-anchor amidated serine lipidation. A propeptide spans 237-255 (removed in mature form); the sequence is PLAGALHILLVFLISKLLF.

N-glycosylated. In terms of processing, GPI-anchored.

The protein localises to the apical cell membrane. In terms of biological role, modulates leading keratinocyte migration and cellular adhesion to matrix proteins during a wound-healing response and promotes wound repair. May play a role during trichilemmal differentiation of the hair follicle. The sequence is that of Placenta-expressed transcript 1 protein (Plet1) from Rattus norvegicus (Rat).